The primary structure comprises 192 residues: T-cell surface glycoprotein CD3 epsilon chain (192 aa).

An N-terminal signal peptide occupies residues 1 to 21 (MQSGNLWRALGLCLLLVGAWA). Residues 23–114 (DADEQKPYEV…QNCMEVNLME (92 aa)) are Extracellular-facing. The region spanning 26-97 (EQKPYEVSIS…EGNKEAAHTL (72 aa)) is the Ig-like domain. Cys-43 and Cys-84 are joined by a disulfide. Asn-72 carries an N-linked (GlcNAc...) asparagine glycan. A helical transmembrane segment spans residues 115–135 (VATIIVVDICVTLGLLLLVYY). Residues 136 to 192 (WSKSRKAKASPMTRGAGAGGRPRGQNKGRPPPVPNPDYEPIRKGQRDLYAGLNQRGV) lie on the Cytoplasmic side of the membrane. Positions 145 to 180 (SPMTRGAGAGGRPRGQNKGRPPPVPNPDYEPIRKGQ) are disordered. An NUMB-binding region region spans residues 160–177 (QNKGRPPPVPNPDYEPIR). The ITAM domain occupies 163–190 (GRPPPVPNPDYEPIRKGQRDLYAGLNQR). The proline-rich sequence stretch occupies residues 164–171 (RPPPVPNP). A phosphotyrosine mark is found at Tyr-173 and Tyr-184.

As to quaternary structure, the TCR-CD3 complex is composed of a CD3D/CD3E and a CD3G/CD3E heterodimers that preferentially associate with TCRalpha and TCRbeta, respectively, to form TCRalpha/CD3E/CD3G and TCRbeta/CD3G/CD3E trimers. In turn, the hexamer interacts with CD3Z homodimer to form the TCR-CD3 complex. Alternatively, TCRalpha and TCRbeta can be replaced by TCRgamma and TCRdelta. Interacts with CD6. Interacts (via Proline-rich sequence) with NCK1; the interaction is ligand dependent but independent of tyrosine kinase activation. In terms of processing, phosphorylated on Tyr residues after T-cell receptor triggering by LCK in association with CD4/CD8.

The protein localises to the cell membrane. Its function is as follows. Part of the TCR-CD3 complex present on T-lymphocyte cell surface that plays an essential role in adaptive immune response. When antigen presenting cells (APCs) activate T-cell receptor (TCR), TCR-mediated signals are transmitted across the cell membrane by the CD3 chains CD3D, CD3E, CD3G and CD3Z. All CD3 chains contain immunoreceptor tyrosine-based activation motifs (ITAMs) in their cytoplasmic domain. Upon TCR engagement, these motifs become phosphorylated by Src family protein tyrosine kinases LCK and FYN, resulting in the activation of downstream signaling pathways. In addition of this role of signal transduction in T-cell activation, CD3E plays an essential role in correct T-cell development. Also participates in internalization and cell surface down-regulation of TCR-CD3 complexes via endocytosis sequences present in CD3E cytosolic region. In addition to its role as a TCR coreceptor, it serves as a receptor for ITPRIPL1. Ligand recognition inhibits T-cell activation by promoting interaction with NCK1, which prevents CD3E-ZAP70 interaction and blocks the ERK-NFkB signaling cascade and calcium influx. The protein is T-cell surface glycoprotein CD3 epsilon chain (CD3E) of Bos taurus (Bovine).